The chain runs to 229 residues: MSQPRPLLSPPETEEQLLAQAQQLSGYTLGELAALAGLVTPENLKRDKGWIGVLLEIWLGASAGSKPEQDFAGLGVELKTIPVDSLGRPLETTFVCVAPLTGNSGVTWETSHVRHKLKRVLWIPVEGERSIPLAQRRVGSPLLWSPNEEEDRQLREDWEELMDMIVLGQVERITARHGEYLQIRPKAANAKALTEAIGARGERILTLPRGFYLKKNFTSALLARHFLIQ.

It belongs to the MutH family.

It localises to the cytoplasm. In terms of biological role, sequence-specific endonuclease that cleaves unmethylated GATC sequences. It is involved in DNA mismatch repair. In Escherichia coli O17:K52:H18 (strain UMN026 / ExPEC), this protein is DNA mismatch repair protein MutH.